The sequence spans 465 residues: tRNA modification GTPase MnmE (465 aa).

(6S)-5-formyl-5,6,7,8-tetrahydrofolate contacts are provided by R21, E85, and K124. The 168-residue stretch at 220 to 387 (GVPVAIIGET…LQQRLVAAAH (168 aa)) folds into the TrmE-type G domain. Residue N230 coordinates K(+). GTP-binding positions include 230–235 (NAGKST), 249–255 (SDIHGTT), and 274–277 (DTAG). S234 is a Mg(2+) binding site. Positions 249, 251, and 254 each coordinate K(+). Residue T255 participates in Mg(2+) binding. K465 is a binding site for (6S)-5-formyl-5,6,7,8-tetrahydrofolate.

Belongs to the TRAFAC class TrmE-Era-EngA-EngB-Septin-like GTPase superfamily. TrmE GTPase family. As to quaternary structure, homodimer. Heterotetramer of two MnmE and two MnmG subunits. It depends on K(+) as a cofactor.

The protein resides in the cytoplasm. In terms of biological role, exhibits a very high intrinsic GTPase hydrolysis rate. Involved in the addition of a carboxymethylaminomethyl (cmnm) group at the wobble position (U34) of certain tRNAs, forming tRNA-cmnm(5)s(2)U34. The polypeptide is tRNA modification GTPase MnmE (Bacteroides fragilis (strain YCH46)).